The sequence spans 742 residues: Zinc finger protein 700 (742 aa).

The tract at residues 1–20 (MPCCSHRSCREDPGTSESRE) is disordered. Over residues 8–20 (SCREDPGTSESRE) the composition is skewed to basic and acidic residues. The KRAB domain maps to 24–104 (VAFEDVAVNF…KEDSHCGETF (81 aa)). C2H2-type zinc fingers lie at residues 194 to 216 (YACKVCGKTFIFHSSIRRHMVMH), 222 to 244 (YKCKFCGKAFHSFSLYLIHERTH), 250 to 272 (YECKQCGKSFTYSATLQIHERTH), 278 to 300 (YECSKCDKAFHSSSSYHRHERSH), 306 to 328 (YQCKECGKAFAYTSSLRRHERTH), 362 to 384 (YKCKICGKGFYSAKSFQTHEKTH), 390 to 412 (YKCKQCGKAFNLSSSFRYHERIH), 418 to 440 (YECKQCGKAFRSASQLRVHGGTH), and 446 to 468 (YECKECGKAFRSTSHLRVHGRTH). Residues 474–502 (YECKECGKAFRYVKHLQIHERTEKHIRMP) form a C2H2-type 10; degenerate zinc finger. C2H2-type zinc fingers lie at residues 508-530 (YKCSICEKGFYSAKSFQTHEKTH), 536-558 (YECNQCGKAFRCCNSLRYHERTH), 564-586 (YECKQCGKAFRSASHLRMHERTH), 592-614 (YECKQCGKAFSCASNLRKHGRTH), 620-642 (YECKQCGKAFRSASNLQMHERTH), 648-670 (YECKECEKAFCKFSSFQIHERKH), 676-698 (YECKHCGNGFTSAKILQIHARTH), and 704-726 (YECKECGKAFNYFSSLHIHARTH).

The protein belongs to the krueppel C2H2-type zinc-finger protein family.

It localises to the nucleus. May be involved in transcriptional regulation. This Homo sapiens (Human) protein is Zinc finger protein 700 (ZNF700).